Reading from the N-terminus, the 638-residue chain is 1-deoxy-D-xylulose-5-phosphate synthase (638 aa).

Thiamine diphosphate contacts are provided by residues histidine 79 and 120 to 122; that span reads AHS. Mg(2+) is bound at residue aspartate 151. Thiamine diphosphate contacts are provided by residues 152-153, asparagine 180, tyrosine 289, and glutamate 371; that span reads GA. Asparagine 180 provides a ligand contact to Mg(2+).

This sequence belongs to the transketolase family. DXPS subfamily. In terms of assembly, homodimer. Mg(2+) is required as a cofactor. The cofactor is thiamine diphosphate.

It carries out the reaction D-glyceraldehyde 3-phosphate + pyruvate + H(+) = 1-deoxy-D-xylulose 5-phosphate + CO2. The protein operates within metabolic intermediate biosynthesis; 1-deoxy-D-xylulose 5-phosphate biosynthesis; 1-deoxy-D-xylulose 5-phosphate from D-glyceraldehyde 3-phosphate and pyruvate: step 1/1. Its function is as follows. Catalyzes the acyloin condensation reaction between C atoms 2 and 3 of pyruvate and glyceraldehyde 3-phosphate to yield 1-deoxy-D-xylulose-5-phosphate (DXP). This chain is 1-deoxy-D-xylulose-5-phosphate synthase, found in Rhizobium etli (strain CIAT 652).